Reading from the N-terminus, the 729-residue chain is DNA topoisomerase 3 (729 aa).

In terms of domain architecture, Toprim spans 3 to 136 (KKAVLAEKPS…VKRLWISSVT (134 aa)). The Mg(2+) site is built by glutamate 9 and aspartate 105. Positions 153-590 (YETLYAAAAA…EMKEYAKAVV (438 aa)) constitute a Topo IA-type catalytic domain. Positions 187–192 (SCGRVQ) are interaction with DNA. Residue tyrosine 311 is the O-(5'-phospho-DNA)-tyrosine intermediate of the active site. A disordered region spans residues 680 to 708 (FEQRRKQNKHKNVSKREVQSYMKKQNKQD).

It belongs to the type IA topoisomerase family. Requires Mg(2+) as cofactor.

It catalyses the reaction ATP-independent breakage of single-stranded DNA, followed by passage and rejoining.. In terms of biological role, releases the supercoiling and torsional tension of DNA, which is introduced during the DNA replication and transcription, by transiently cleaving and rejoining one strand of the DNA duplex. Introduces a single-strand break via transesterification at a target site in duplex DNA. The scissile phosphodiester is attacked by the catalytic tyrosine of the enzyme, resulting in the formation of a DNA-(5'-phosphotyrosyl)-enzyme intermediate and the expulsion of a 3'-OH DNA strand. The free DNA strand then undergoes passage around the unbroken strand, thus removing DNA supercoils. Finally, in the religation step, the DNA 3'-OH attacks the covalent intermediate to expel the active-site tyrosine and restore the DNA phosphodiester backbone. The chain is DNA topoisomerase 3 from Shouchella clausii (strain KSM-K16) (Alkalihalobacillus clausii).